Reading from the N-terminus, the 367-residue chain is Aminomethyltransferase (367 aa).

The protein belongs to the GcvT family. In terms of assembly, the glycine cleavage system is composed of four proteins: P, T, L and H.

It catalyses the reaction N(6)-[(R)-S(8)-aminomethyldihydrolipoyl]-L-lysyl-[protein] + (6S)-5,6,7,8-tetrahydrofolate = N(6)-[(R)-dihydrolipoyl]-L-lysyl-[protein] + (6R)-5,10-methylene-5,6,7,8-tetrahydrofolate + NH4(+). Functionally, the glycine cleavage system catalyzes the degradation of glycine. The chain is Aminomethyltransferase from Shouchella clausii (strain KSM-K16) (Alkalihalobacillus clausii).